The sequence spans 311 residues: Olfactory receptor 10D1B (311 aa).

Over 1-24 (MKNLSVVTQFILLGIPHTEGVETM) the chain is Extracellular. Residues 25–45 (LFVLFFSFYIFTLVGNLLILL) form a helical membrane-spanning segment. The Cytoplasmic portion of the chain corresponds to 46–54 (AIVSSSRLH). Residues 55–75 (TPMYFFLCQLSVCDIFFPSVS) form a helical membrane-spanning segment. Topologically, residues 76–95 (SPKMLFYLSGNTPAISYAGC) are extracellular. A disulfide bridge connects residues Cys95 and Cys187. Residues 96-116 (VSQLFFYHFLGGTECFLYTVM) form a helical membrane-spanning segment. Topologically, residues 117 to 137 (AYDRFVAICYPLRYSVIMSHR) are cytoplasmic. The helical transmembrane segment at 138 to 158 (ICAFLAMGTAVFGCIHSTFLT) threads the bilayer. Residues 159–192 (TLTFQLPYCGPKDVNYYFCDIPVVMKLACADTST) lie on the Extracellular side of the membrane. The helical transmembrane segment at 193–213 (LEMVGFISVGLMPLSCFFFIL) threads the bilayer. The Cytoplasmic segment spans residues 214 to 237 (TSYSCIVRSILQIRSTEGRHRAFS). A helical transmembrane segment spans residues 238–258 (TCSAHFTAILLFYMPVIFIYL). Over 259–271 (RPTPSPWLDATVQ) the chain is Extracellular. The helical transmembrane segment at 272-288 (ILNNLVTPMLNPLIYSL) threads the bilayer. The Cytoplasmic segment spans residues 289-311 (RNKEVKSSLWTVLHLLCFLPKHL).

This sequence belongs to the G-protein coupled receptor 1 family.

It is found in the cell membrane. Its function is as follows. Odorant receptor. The sequence is that of Olfactory receptor 10D1B from Mus musculus (Mouse).